The sequence spans 179 residues: ATP synthase subunit delta (179 aa).

This sequence belongs to the ATPase delta chain family. F-type ATPases have 2 components, F(1) - the catalytic core - and F(0) - the membrane proton channel. F(1) has five subunits: alpha(3), beta(3), gamma(1), delta(1), epsilon(1). F(0) has three main subunits: a(1), b(2) and c(10-14). The alpha and beta chains form an alternating ring which encloses part of the gamma chain. F(1) is attached to F(0) by a central stalk formed by the gamma and epsilon chains, while a peripheral stalk is formed by the delta and b chains.

Its subcellular location is the cell inner membrane. Its function is as follows. F(1)F(0) ATP synthase produces ATP from ADP in the presence of a proton or sodium gradient. F-type ATPases consist of two structural domains, F(1) containing the extramembraneous catalytic core and F(0) containing the membrane proton channel, linked together by a central stalk and a peripheral stalk. During catalysis, ATP synthesis in the catalytic domain of F(1) is coupled via a rotary mechanism of the central stalk subunits to proton translocation. Functionally, this protein is part of the stalk that links CF(0) to CF(1). It either transmits conformational changes from CF(0) to CF(1) or is implicated in proton conduction. The polypeptide is ATP synthase subunit delta (Anaeromyxobacter dehalogenans (strain 2CP-C)).